The following is a 1322-amino-acid chain: Ice nucleation protein InaA (1322 aa).

The octapeptide periodicity stretch occupies residues 162–1281 (ATYGSTLSGT…LTAGENSVLI (1120 aa)). 4 stretches are compositionally biased toward polar residues: residues 271–302 (SLTA…QKGS), 327–350 (TQTA…QKGS), 373–398 (GSTQ…QKGS), and 423–446 (TQTA…QKGS). Disordered stretches follow at residues 271-303 (SLTA…KGSD), 327-358 (TQTA…GYGS), 372-399 (YGST…KGSD), and 423-448 (TQTA…GSDL).

It belongs to the bacterial ice nucleation protein family.

Its subcellular location is the cell outer membrane. Its function is as follows. Ice nucleation proteins enable bacteria to nucleate crystallization in supercooled water. This Pantoea ananas (Erwinia uredovora) protein is Ice nucleation protein InaA (inaA).